Here is a 444-residue protein sequence, read N- to C-terminus: Exodeoxyribonuclease 7 large subunit (444 aa).

The protein belongs to the XseA family. Heterooligomer composed of large and small subunits.

The protein resides in the cytoplasm. The catalysed reaction is Exonucleolytic cleavage in either 5'- to 3'- or 3'- to 5'-direction to yield nucleoside 5'-phosphates.. Bidirectionally degrades single-stranded DNA into large acid-insoluble oligonucleotides, which are then degraded further into small acid-soluble oligonucleotides. This chain is Exodeoxyribonuclease 7 large subunit, found in Hahella chejuensis (strain KCTC 2396).